We begin with the raw amino-acid sequence, 1558 residues long: Arginine-glutamic acid dipeptide repeats protein (1558 aa).

Residues 1–36 (MTADKDKDKDKEKDRDRDRDRERDKRDKARESENAR) show a composition bias toward basic and acidic residues. The disordered stretch occupies residues 1–90 (MTADKDKDKD…KKKSRYERTD (90 aa)). Ser53 and Ser56 each carry phosphoserine. The span at 74–85 (KSRKKPPKKKSR) shows a compositional bias: basic residues. The region spanning 103–283 (VVYRPGDCVY…PETRRLNSTQ (181 aa)) is the BAH domain. A Phosphothreonine modification is found at Thr120. Phosphoserine occurs at positions 142 and 304. Residues 284-387 (GEIRVGPSHQ…KALQRLVKKP (104 aa)) form the ELM2 domain. The region spanning 391 to 443 (LIEKCWTEDEVKRFVKGLRQYGKNFFRIRKELLPSKETGELITFYYYWKKTPE) is the SANT domain. The interval 464–495 (TRTASTPVNTPSRPPSSEFLDLSSASEDDFDS) is disordered. The span at 465-474 (RTASTPVNTP) shows a compositional bias: polar residues. The segment covering 479–488 (SSEFLDLSSA) has biased composition (low complexity). A GATA-type zinc finger spans residues 507–532 (CRHCFTTTSKDWHHGGRENILLCTDC). The disordered stretch occupies residues 542–1125 (LPPIEKPVDP…PSHASQSARF (584 aa)). Lys560 is covalently cross-linked (Glycyl lysine isopeptide (Lys-Gly) (interchain with G-Cter in SUMO2)). The residue at position 593 (Thr593) is a Phosphothreonine. Residues Ser594, Ser600, and Ser613 each carry the phosphoserine modification. Low complexity predominate over residues 609 to 623 (SGRNSPSAASTSSND). A compositionally biased stretch (basic and acidic residues) spans 624–640 (SKAETVKKSAKKVKEEA). Lys637 participates in a covalent cross-link: Glycyl lysine isopeptide (Lys-Gly) (interchain with G-Cter in SUMO2). 4 positions are modified to phosphoserine: Ser642, Ser656, Ser675, and Ser679. Residues 652–673 (EKVASDTEDTDRITSKKTKTQE) are compositionally biased toward basic and acidic residues. Residues 688 to 708 (SDSRSVNDEGSSDPKDIDQDN) show a composition bias toward basic and acidic residues. Residues 709–720 (RSTSPSIPSPQD) are compositionally biased toward polar residues. The segment covering 726–752 (DSSAQQQMLQAQPPALQAPSGAASAPS) has biased composition (low complexity). Positions 778–792 (SPATSQPPNQTQSTV) are enriched in polar residues. Positions 806 to 823 (LHPPRLPSPHPPLQPMTA) are enriched in pro residues. Low complexity-rich tracts occupy residues 824–857 (PPSQSSAQPHPQPSLHSQGPPGPHSLQTGPLLQH), 865–874 (GLPSQPSQGQ), and 891–901 (QLPASQSALQP). Pro residues predominate over residues 902 to 932 (QQPPREQPLPPAPLAMPHIKPPPTTPIPQLP). Residues 962 to 972 (KPLSSLSTHHP) are compositionally biased toward low complexity. Residues 1012-1023 (HPTTGLHQVPSQ) are compositionally biased toward polar residues. Residues 1027 to 1053 (PQHPFVPGGPPPITPPSCPPTSTPPAG) are compositionally biased toward pro residues. Over residues 1054-1077 (PSSSSQPPCSAAVSSGGSVPGAPS) the composition is skewed to low complexity. Residues Ser1098, Ser1105, and Ser1107 each carry the phosphoserine modification. The span at 1098–1109 (SPPPPPRSPSPE) shows a compositional bias: pro residues. Residue Thr1111 is modified to Phosphothreonine. Residues 1148–1203 (GSKLAKKREEAIEKAKREAEQKAREEREREKEKEKEREREREREREAERAAKASSS) are a coiled coil. Residue Lys1150 is modified to N6-acetyllysine. Residues 1154–1198 (KREEAIEKAKREAEQKAREEREREKEKEKEREREREREREAERAA) show a composition bias toward basic and acidic residues. Residues 1154–1238 (KREEAIEKAK…TTIAAVPPYI (85 aa)) form a disordered region. Phosphotyrosine is present on Tyr1251. Position 1258 is a phosphoserine (Ser1258).

As to quaternary structure, interacts with HDAC1 and ATN1. Interaction with ATN1 is improved when the poly-Gln region of ATN1 is extended. Interacts with FAT1.

It localises to the nucleus. The protein resides in the PML body. Plays a role as a transcriptional repressor during development. May play a role in the control of cell survival. The chain is Arginine-glutamic acid dipeptide repeats protein (Rere) from Mus musculus (Mouse).